The primary structure comprises 371 residues: RNA polymerase sigma factor SigA (371 aa).

The sigma-70 factor domain-2 stretch occupies residues 137 to 207; the sequence is LAEANLRLVV…TRAIADQART (71 aa). The Interaction with polymerase core subunit RpoC motif lies at 161-164; it reads DLIQ. Positions 216-292 are sigma-70 factor domain-3; that stretch reads ETINKLVREQ…DEVIENPVDY (77 aa). The tract at residues 305–358 is sigma-70 factor domain-4; sequence VLDTLTDREENVLRLRFGLDDGKMRTLEDVGKVFDVTRERIRQIEAKALRKLRH. A DNA-binding region (H-T-H motif) is located at residues 331–350; that stretch reads LEDVGKVFDVTRERIRQIEA.

It belongs to the sigma-70 factor family. RpoD/SigA subfamily. In terms of assembly, interacts transiently with the RNA polymerase catalytic core.

Its subcellular location is the cytoplasm. Its function is as follows. Sigma factors are initiation factors that promote the attachment of RNA polymerase to specific initiation sites and are then released. This sigma factor is the primary sigma factor during exponential growth. This is RNA polymerase sigma factor SigA from Streptococcus mutans serotype c (strain ATCC 700610 / UA159).